The sequence spans 352 residues: Ion-translocating oxidoreductase complex subunit D (352 aa).

The next 4 helical transmembrane spans lie at 20-40, 42-62, 89-109, and 123-143; these read IMLL…WFFG, GTLV…ALVL, IPPL…VIIA, and PAMI…TSWL. FMN phosphoryl threonine is present on threonine 187. The next 5 helical transmembrane spans lie at 214–234, 242–262, 267–287, 301–321, and 322–342; these read ILAG…GVWL, WHIP…GWLF, LAAP…FFIL, LIFG…GGYP, and DGVA…DYYT.

The protein belongs to the NqrB/RnfD family. As to quaternary structure, the complex is composed of six subunits: RsxA, RsxB, RsxC, RsxD, RsxE and RsxG. It depends on FMN as a cofactor.

It localises to the cell inner membrane. Its function is as follows. Part of a membrane-bound complex that couples electron transfer with translocation of ions across the membrane. Required to maintain the reduced state of SoxR. This chain is Ion-translocating oxidoreductase complex subunit D, found in Escherichia coli O127:H6 (strain E2348/69 / EPEC).